Reading from the N-terminus, the 321-residue chain is tRNA U34 carboxymethyltransferase (321 aa).

Carboxy-S-adenosyl-L-methionine contacts are provided by residues K90, W104, K109, G129, 151 to 153 (DPT), 180 to 181 (IE), M195, Y199, and R314.

The protein belongs to the class I-like SAM-binding methyltransferase superfamily. CmoB family. As to quaternary structure, homotetramer.

The enzyme catalyses carboxy-S-adenosyl-L-methionine + 5-hydroxyuridine(34) in tRNA = 5-carboxymethoxyuridine(34) in tRNA + S-adenosyl-L-homocysteine + H(+). Catalyzes carboxymethyl transfer from carboxy-S-adenosyl-L-methionine (Cx-SAM) to 5-hydroxyuridine (ho5U) to form 5-carboxymethoxyuridine (cmo5U) at position 34 in tRNAs. The sequence is that of tRNA U34 carboxymethyltransferase from Haemophilus influenzae (strain PittEE).